A 75-amino-acid chain; its full sequence is uncharacterized protein (75 aa).

The signal sequence occupies residues 1 to 25 (MSLFYRAVALGTLSALVWYSTSILA). The helical transmembrane segment at 55–75 (YRALLAFSLVICGTLLVTCVI) threads the bilayer.

It is found in the host endoplasmic reticulum membrane. Its function is as follows. Plays a role in the down-regulation of the host NKG2D ligand MICA by targeting ER-resident MICA to proteasomal degradation prior to the GPI-anchoring step. In turn, MICA reduction diminishes NK-cell killing of HCMV-infected cells. This is an uncharacterized protein from Homo sapiens (Human).